We begin with the raw amino-acid sequence, 1304 residues long: Histone-lysine N-methyltransferase met-2 (1304 aa).

Positions 1-16 (MDQQEPSNNVDTSSIL) are enriched in polar residues. The tract at residues 1–31 (MDQQEPSNNVDTSSILSDDGMETQEQSSFVT) is disordered. The stretch at 97-129 (NESEQEAVAAQRRVDAEKTAKDEAELKQQEEAE) forms a coiled coil. The region spanning 834-909 (FHRNSPIHTP…FSFDARIDTA (76 aa)) is the MBD domain. The Pre-SET domain maps to 971-1049 (SGCSCDGDCS…SCYNRVVQNN (79 aa)). Zn(2+) is bound by residues C973, C975, C979, C985, C987, C1030, C1034, C1036, and C1041. Positions 1052–1277 (YPMHIFKTAQ…AGDELTWDYQ (226 aa)) constitute an SET domain. S-adenosyl-L-methionine-binding positions include 1062–1064 (SGW), D1098, and Y1100. Over residues 1113 to 1122 (EKGREDHETD) the composition is skewed to basic and acidic residues. A disordered region spans residues 1113-1201 (EKGREDHETD…DSMEKDNIES (89 aa)). Residues 1128–1144 (DESDYDDEEGSDGDSGD) are compositionally biased toward acidic residues. The segment covering 1152 to 1165 (KRQDSSESGEETKR) has biased composition (basic and acidic residues). A compositionally biased stretch (basic residues) spans 1166–1178 (LTRQKRKQSKKSG). The span at 1182-1201 (SVEKDDTTPRDSMEKDNIES) shows a compositional bias: basic and acidic residues. S-adenosyl-L-methionine-binding positions include R1231 and 1234–1235 (NH). Residues C1237, C1290, C1292, and C1297 each contribute to the Zn(2+) site. The 17-residue stretch at 1286-1302 (TQLTCHCGAENCTGRLL) folds into the Post-SET domain.

It belongs to the class V-like SAM-binding methyltransferase superfamily.

It is found in the nucleus. The protein resides in the chromosome. The protein localises to the cytoplasm. The enzyme catalyses N(6)-methyl-L-lysyl(9)-[histone H3] + S-adenosyl-L-methionine = N(6),N(6)-dimethyl-L-lysyl(9)-[histone H3] + S-adenosyl-L-homocysteine + H(+). It catalyses the reaction L-lysyl(9)-[histone H3] + S-adenosyl-L-methionine = N(6)-methyl-L-lysyl(9)-[histone H3] + S-adenosyl-L-homocysteine + H(+). Functionally, histone methyltransferase which is required for the mono- and dimethylation of 'Lys-9' of histone H3. This increases the efficiency of set-25-mediated trimethylation of histone H3 'Lys-9'. Involved in the transcriptional repression of lin-3 which is required for the negative regulation of vulval cell fate specification during postembryonic development. Has a role in blocking checkpoint signaling and mediating the transcriptional silencing of meiotic sex chromosome inactivation; a mechanism which enables checkpoint proteins to distinguish between the partnerless male X chromosome and asynapsed chromosomes thereby shielding the lone X from inappropriate activation of an apoptotic program. Operates redundantly with set-25 to position chromatin at the nuclear periphery. Required for small-RNA-induced H3K9 methylation. Together with set-25, protects and stabilizes repeat-rich genomic regions by suppressing transcription-induced replication stress through methylation of H3K9. Together with spr-5, required for transgenerational fertility. This Caenorhabditis elegans protein is Histone-lysine N-methyltransferase met-2 (met-2).